Reading from the N-terminus, the 157-residue chain is V-type proton ATPase 16 kDa proteolipid subunit c (157 aa).

The Lumenal portion of the chain corresponds to 1–10 (MALPEENPVY). The helical transmembrane segment at 11–33 (GPFFGVMGAAAAIIFSALGAAYG) threads the bilayer. Residues 34 to 55 (TAKSGTGIAAMSVMRPELIMKS) are Cytoplasmic-facing. Residues 56–76 (IIPVVMAGIIAIYGLVVAVLI) traverse the membrane as a helical segment. At 77-94 (AGSLDTPTKYSLYKGFIH) the chain is on the lumenal side. A helical membrane pass occupies residues 95-116 (LGAGLAVGFSGLAAGFAIGIVG). Over 117–128 (DAGVRGTAQQPR) the chain is Cytoplasmic. Residues 129–154 (LFVGMILILIFAEVLGLYGLIVAIYL) form a helical membrane-spanning segment. The Lumenal segment spans residues 155–157 (YTK).

Belongs to the V-ATPase proteolipid subunit family. V-ATPase is a heteromultimeric enzyme made up of two complexes: the ATP-hydrolytic V1 complex and the proton translocation V0 complex. The V1 complex consists of three catalytic AB heterodimers that form a heterohexamer, three peripheral stalks each consisting of EG heterodimers, one central rotor including subunits D and F, and the regulatory subunits C and H. The proton translocation complex V0 consists of the proton transport subunit a, a ring of proteolipid subunits c9c'', rotary subunit d, subunits e and f, and the accessory subunits VhaAC45 and ATP6AP2.

The protein resides in the membrane. Proton-conducting pore forming subunit of the V0 complex of vacuolar(H+)-ATPase (V-ATPase), a multisubunit enzyme composed of a peripheral complex (V1) that hydrolyzes ATP and a membrane integral complex (V0) that translocates protons. V-ATPase is responsible for acidifying and maintaining the pH of intracellular compartments and in some cell types, is targeted to the plasma membrane, where it is responsible for acidifying the extracellular environment. In Aedes aegypti (Yellowfever mosquito), this protein is V-type proton ATPase 16 kDa proteolipid subunit c.